Here is a 393-residue protein sequence, read N- to C-terminus: Formate-dependent phosphoribosylglycinamide formyltransferase (393 aa).

N(1)-(5-phospho-beta-D-ribosyl)glycinamide contacts are provided by residues 22–23 (EL) and Glu82. Residues Arg114, Lys155, 160 to 165 (SSGHGQ), 195 to 198 (EGFV), and Glu203 contribute to the ATP site. An ATP-grasp domain is found at 119 to 308 (RLAAEKLKLP…EFALHARAIL (190 aa)). Glu267 and Glu279 together coordinate Mg(2+). N(1)-(5-phospho-beta-D-ribosyl)glycinamide-binding positions include Asp286, Lys356, and 363–364 (RR).

This sequence belongs to the PurK/PurT family. Homodimer.

It catalyses the reaction N(1)-(5-phospho-beta-D-ribosyl)glycinamide + formate + ATP = N(2)-formyl-N(1)-(5-phospho-beta-D-ribosyl)glycinamide + ADP + phosphate + H(+). It functions in the pathway purine metabolism; IMP biosynthesis via de novo pathway; N(2)-formyl-N(1)-(5-phospho-D-ribosyl)glycinamide from N(1)-(5-phospho-D-ribosyl)glycinamide (formate route): step 1/1. Functionally, involved in the de novo purine biosynthesis. Catalyzes the transfer of formate to 5-phospho-ribosyl-glycinamide (GAR), producing 5-phospho-ribosyl-N-formylglycinamide (FGAR). Formate is provided by PurU via hydrolysis of 10-formyl-tetrahydrofolate. This chain is Formate-dependent phosphoribosylglycinamide formyltransferase, found in Histophilus somni (strain 129Pt) (Haemophilus somnus).